The following is a 132-amino-acid chain: Small ribosomal subunit protein uS8 (132 aa).

This sequence belongs to the universal ribosomal protein uS8 family. As to quaternary structure, part of the 30S ribosomal subunit. Contacts proteins S5 and S12.

Its function is as follows. One of the primary rRNA binding proteins, it binds directly to 16S rRNA central domain where it helps coordinate assembly of the platform of the 30S subunit. The protein is Small ribosomal subunit protein uS8 of Brucella anthropi (strain ATCC 49188 / DSM 6882 / CCUG 24695 / JCM 21032 / LMG 3331 / NBRC 15819 / NCTC 12168 / Alc 37) (Ochrobactrum anthropi).